The sequence spans 261 residues: Ribonuclease HII (261 aa).

Positions methionine 1–valine 20 are enriched in basic and acidic residues. A disordered region spans residues methionine 1 to alanine 23. Positions tryptophan 42 to proline 230 constitute an RNase H type-2 domain. Positions 48, 49, and 139 each coordinate a divalent metal cation.

Belongs to the RNase HII family. The cofactor is Mn(2+). It depends on Mg(2+) as a cofactor.

The protein resides in the cytoplasm. The catalysed reaction is Endonucleolytic cleavage to 5'-phosphomonoester.. Its function is as follows. Endonuclease that specifically degrades the RNA of RNA-DNA hybrids. The sequence is that of Ribonuclease HII from Bradyrhizobium diazoefficiens (strain JCM 10833 / BCRC 13528 / IAM 13628 / NBRC 14792 / USDA 110).